Here is an 89-residue protein sequence, read N- to C-terminus: MTLANIKSAKKRAVQSEKSRQHNASQRSMMRTYIKKVYAAVAAGEKAAAQAAFVEMQKVVDRMASKGLIHANKAANHKSKLVAQIKKLA.

The disordered stretch occupies residues 1–28 (MTLANIKSAKKRAVQSEKSRQHNASQRS).

This sequence belongs to the bacterial ribosomal protein bS20 family.

Functionally, binds directly to 16S ribosomal RNA. This is Small ribosomal subunit protein bS20 from Mannheimia succiniciproducens (strain KCTC 0769BP / MBEL55E).